The chain runs to 179 residues: Large ribosomal subunit protein uL6 (179 aa).

This sequence belongs to the universal ribosomal protein uL6 family. In terms of assembly, part of the 50S ribosomal subunit.

This protein binds to the 23S rRNA, and is important in its secondary structure. It is located near the subunit interface in the base of the L7/L12 stalk, and near the tRNA binding site of the peptidyltransferase center. In Treponema pallidum (strain Nichols), this protein is Large ribosomal subunit protein uL6.